A 171-amino-acid polypeptide reads, in one-letter code: 3-hydroxydecanoyl-[acyl-carrier-protein] dehydratase (171 aa).

The active site involves His-70.

It belongs to the thioester dehydratase family. FabA subfamily. As to quaternary structure, homodimer.

Its subcellular location is the cytoplasm. It catalyses the reaction a (3R)-hydroxyacyl-[ACP] = a (2E)-enoyl-[ACP] + H2O. The enzyme catalyses (3R)-hydroxydecanoyl-[ACP] = (2E)-decenoyl-[ACP] + H2O. It carries out the reaction (2E)-decenoyl-[ACP] = (3Z)-decenoyl-[ACP]. It functions in the pathway lipid metabolism; fatty acid biosynthesis. In terms of biological role, necessary for the introduction of cis unsaturation into fatty acids. Catalyzes the dehydration of (3R)-3-hydroxydecanoyl-ACP to E-(2)-decenoyl-ACP and then its isomerization to Z-(3)-decenoyl-ACP. Can catalyze the dehydratase reaction for beta-hydroxyacyl-ACPs with saturated chain lengths up to 16:0, being most active on intermediate chain length. The sequence is that of 3-hydroxydecanoyl-[acyl-carrier-protein] dehydratase from Chromohalobacter salexigens (strain ATCC BAA-138 / DSM 3043 / CIP 106854 / NCIMB 13768 / 1H11).